The following is a 708-amino-acid chain: MEANHQRNDLGLVALTMLAQYHNISLNPEEIKHKFDLDGKGLSLTAWLLAAKSLALKAKHIKKEVSRLHLVNLPALVWQDNGKHFLLVKVDTDNNRYLTYDLEKDAPQILSQDEFEACYQGQLILVTSRASVVGQLAKFDFTWFIPAVIKYRKIFLETLIVSIFLQIFALITPLFFQVVMDKVLVHRGFSTLNIITVALAIVIIFEIVLSGLRTYVFSHSTSRIDVELGAKLFRHLLSLPISYFENRRVGDTVARVRELDQIRNFLTGQALTSVLDLLFSFIFFAVMWYYSPKLTLVILGSLPCYILWSIFISPILRRRLDDKFARSADNQAFLVESVTAINMIKAMAVAPQMTDTWDKQLASYVSSSFRVTVLATIGQQGVQLIQKTVMVINLWLGAHLVISGDLSIGQLIAFNMLSGQVIAPVIRLAQLWQDFQQVGISVTRLGDVLNSPTEQYQGKLSLPEIKGDISFKNIRFRYKPDAPTILNNVNLEIRQGEVIGIVGRSGSGKSTLTKLLQRFYIPENGQVLIDGHDLALADPNWLRRQIGVVLQDNVLLNRSIRENIALSDPGMPMERVIYAAKLAGAHDFISELREGYNTIVGEQGAGLSGGQRQRIAIARALVNNPKILIFDEATSALDYESEHIIMQNMQKICQGRTVILIAHRLSTVKNADRIIVMEKGEIVEQGKHHELLQNSNGLYSYLHQLQLN.

In terms of domain architecture, Peptidase C39 spans 1–126 (MEANHQRNDL…ACYQGQLILV (126 aa)). The ABC transmembrane type-1 domain maps to 155 to 437 (FLETLIVSIF…LAQLWQDFQQ (283 aa)). 5 consecutive transmembrane segments (helical) span residues 159-179 (LIVS…FQVV), 192-212 (LNII…LSGL), 270-290 (ALTS…MWYY), 296-316 (LVIL…SPIL), and 389-409 (VMVI…LSIG). An ABC transporter domain is found at 469–704 (ISFKNIRFRY…SNGLYSYLHQ (236 aa)). ATP is bound at residue 503-510 (GRSGSGKS).

Belongs to the ABC transporter superfamily. Protein-1 exporter (TC 3.A.1.109) family. In terms of assembly, homodimer.

Its subcellular location is the cell inner membrane. The enzyme catalyses ATP + H2O + proteinSide 1 = ADP + phosphate + proteinSide 2.. Functionally, part of the ABC transporter complex LktBD involved in leukotoxin export. Transmembrane domains (TMD) form a pore in the inner membrane and the ATP-binding domain (NBD) is responsible for energy generation. The polypeptide is Leukotoxin translocation ATP-binding protein LktB (lktB) (Mannheimia haemolytica (Pasteurella haemolytica)).